The sequence spans 266 residues: Isoprenyl transferase (266 aa).

The active site involves Asp-36. A Mg(2+)-binding site is contributed by Asp-36. Residues 37 to 40 (GNGR), Trp-41, Arg-49, His-53, and 81 to 83 (STE) contribute to the substrate site. Asn-84 functions as the Proton acceptor in the catalytic mechanism. Residues Trp-85, Arg-87, Arg-204, and 210-212 (RIS) contribute to the substrate site. Glu-223 provides a ligand contact to Mg(2+).

Belongs to the UPP synthase family. In terms of assembly, homodimer. The cofactor is Mg(2+).

In terms of biological role, catalyzes the condensation of isopentenyl diphosphate (IPP) with allylic pyrophosphates generating different type of terpenoids. In Prochlorococcus marinus (strain SARG / CCMP1375 / SS120), this protein is Isoprenyl transferase.